The sequence spans 114 residues: Ferritin-like protein (114 aa).

Glu-29, Glu-59, and His-62 together coordinate Fe cation. A cargo-loading peptide region spans residues 86–114 (FTDKPITEIEEETSGGSENTGGDLGIRKL). The tract at residues 94–114 (IEEETSGGSENTGGDLGIRKL) is disordered. A compositionally biased stretch (gly residues) spans 103–114 (ENTGGDLGIRKL).

This sequence belongs to the ferritin-like superfamily. As to quaternary structure, probably forms a decamer which binds to the pentameric axis of the interior of the protein shell; as the Flp cargo protein is flexible, packing into the shell is not rigid. 3, 4 or 5 cargo decamers bind inside the encapulin nanocompartment. Requires Fe cation as cofactor.

The protein localises to the encapsulin nanocompartment. In terms of biological role, cargo protein of a type 1 encapsulin nanocompartment. A ferritin-like protein that probably stores iron in the encapsulin nanocompartment. This is Ferritin-like protein from Thermotoga maritima (strain ATCC 43589 / DSM 3109 / JCM 10099 / NBRC 100826 / MSB8).